The sequence spans 311 residues: Probable manganese-dependent inorganic pyrophosphatase (311 aa).

The Mn(2+) site is built by His-9, Asp-13, Asp-15, Asp-75, His-97, and Asp-149.

The protein belongs to the PPase class C family. It depends on Mn(2+) as a cofactor.

It localises to the cytoplasm. It catalyses the reaction diphosphate + H2O = 2 phosphate + H(+). The polypeptide is Probable manganese-dependent inorganic pyrophosphatase (Lactobacillus acidophilus (strain ATCC 700396 / NCK56 / N2 / NCFM)).